The sequence spans 556 residues: Arginine--tRNA ligase (556 aa).

The short motif at 132–142 (ANPTGDLHLGH) is the 'HIGH' region element.

The protein belongs to the class-I aminoacyl-tRNA synthetase family. Monomer.

Its subcellular location is the cytoplasm. The enzyme catalyses tRNA(Arg) + L-arginine + ATP = L-arginyl-tRNA(Arg) + AMP + diphosphate. The polypeptide is Arginine--tRNA ligase (Listeria welshimeri serovar 6b (strain ATCC 35897 / DSM 20650 / CCUG 15529 / CIP 8149 / NCTC 11857 / SLCC 5334 / V8)).